The chain runs to 220 residues: GTP-binding protein YPT53 (220 aa).

GTP contacts are provided by residues 19 to 26 (GESAVGKS), 67 to 71 (DTAGQ), and 125 to 128 (NKMD). 2 S-geranylgeranyl cysteine lipidation sites follow: C218 and C220. Cysteine methyl ester is present on C220.

This sequence belongs to the small GTPase superfamily. Rab family.

It is found in the cell membrane. Its function is as follows. Required for transport in the endocytic pathway and for correct sorting of the vacuolar hydrolases suggesting a possible intersection of the endocytic with the vacuolar sorting pathway. May be involved in recruiting the MON1-CCZ1 complex to membranes enriched in phosphatidylinositol 3-phosphate (PtdIns[3]P) or other charged lipids, leading to recruitment of YPT7. In Saccharomyces cerevisiae (strain ATCC 204508 / S288c) (Baker's yeast), this protein is GTP-binding protein YPT53 (YPT53).